Reading from the N-terminus, the 363-residue chain is Cobalt-precorrin-5B C(1)-methyltransferase (363 aa).

It belongs to the CbiD family.

It carries out the reaction Co-precorrin-5B + S-adenosyl-L-methionine = Co-precorrin-6A + S-adenosyl-L-homocysteine. It participates in cofactor biosynthesis; adenosylcobalamin biosynthesis; cob(II)yrinate a,c-diamide from sirohydrochlorin (anaerobic route): step 6/10. Catalyzes the methylation of C-1 in cobalt-precorrin-5B to form cobalt-precorrin-6A. This Burkholderia pseudomallei (strain K96243) protein is Cobalt-precorrin-5B C(1)-methyltransferase.